The primary structure comprises 215 residues: 3-demethoxyubiquinol 3-hydroxylase (215 aa).

Fe cation-binding residues include Glu-64, Glu-94, His-97, Glu-146, Glu-178, and His-181.

Belongs to the COQ7 family. The cofactor is Fe cation.

It is found in the cell membrane. The catalysed reaction is a 5-methoxy-2-methyl-3-(all-trans-polyprenyl)benzene-1,4-diol + AH2 + O2 = a 3-demethylubiquinol + A + H2O. Its pathway is cofactor biosynthesis; ubiquinone biosynthesis. Its function is as follows. Catalyzes the hydroxylation of 2-nonaprenyl-3-methyl-6-methoxy-1,4-benzoquinol during ubiquinone biosynthesis. The protein is 3-demethoxyubiquinol 3-hydroxylase of Pseudomonas savastanoi pv. phaseolicola (strain 1448A / Race 6) (Pseudomonas syringae pv. phaseolicola (strain 1448A / Race 6)).